The chain runs to 207 residues: dTTP/UTP pyrophosphatase (207 aa).

D87 functions as the Proton acceptor in the catalytic mechanism.

Belongs to the Maf family. YhdE subfamily. The cofactor is a divalent metal cation.

It localises to the cytoplasm. It catalyses the reaction dTTP + H2O = dTMP + diphosphate + H(+). The catalysed reaction is UTP + H2O = UMP + diphosphate + H(+). In terms of biological role, nucleoside triphosphate pyrophosphatase that hydrolyzes dTTP and UTP. May have a dual role in cell division arrest and in preventing the incorporation of modified nucleotides into cellular nucleic acids. This Bordetella bronchiseptica (strain ATCC BAA-588 / NCTC 13252 / RB50) (Alcaligenes bronchisepticus) protein is dTTP/UTP pyrophosphatase.